We begin with the raw amino-acid sequence, 307 residues long: Porphobilinogen deaminase (307 aa).

C239 carries the S-(dipyrrolylmethanemethyl)cysteine modification.

Belongs to the HMBS family. As to quaternary structure, monomer. Dipyrromethane serves as cofactor.

It catalyses the reaction 4 porphobilinogen + H2O = hydroxymethylbilane + 4 NH4(+). It participates in porphyrin-containing compound metabolism; protoporphyrin-IX biosynthesis; coproporphyrinogen-III from 5-aminolevulinate: step 2/4. In terms of biological role, tetrapolymerization of the monopyrrole PBG into the hydroxymethylbilane pre-uroporphyrinogen in several discrete steps. The chain is Porphobilinogen deaminase from Campylobacter jejuni subsp. jejuni serotype O:6 (strain 81116 / NCTC 11828).